A 265-amino-acid chain; its full sequence is tRNA (guanine-N(7)-)-methyltransferase (265 aa).

The tract at residues 1–40 (MIHDDDPNAPGAPHDDDATAAPASATRAAPAAGDDDDANP) is disordered. The segment covering 19–32 (TAAPASATRAAPAA) has biased composition (low complexity). 4 residues coordinate S-adenosyl-L-methionine: glutamate 95, glutamate 120, aspartate 147, and aspartate 170. Aspartate 170 is a catalytic residue. Substrate-binding positions include lysine 174, aspartate 206, and 241–244 (TKFE).

Belongs to the class I-like SAM-binding methyltransferase superfamily. TrmB family.

It carries out the reaction guanosine(46) in tRNA + S-adenosyl-L-methionine = N(7)-methylguanosine(46) in tRNA + S-adenosyl-L-homocysteine. Its pathway is tRNA modification; N(7)-methylguanine-tRNA biosynthesis. Catalyzes the formation of N(7)-methylguanine at position 46 (m7G46) in tRNA. The chain is tRNA (guanine-N(7)-)-methyltransferase from Burkholderia pseudomallei (strain 1710b).